An 84-amino-acid chain; its full sequence is U8-theraphotoxin-Hhn1b (84 aa).

An N-terminal signal peptide occupies residues 1–21 (MKVVLIVCLVWVMAMMELVSC). 4 disulfide bridges follow: cysteine 23/cysteine 35, cysteine 29/cysteine 44, cysteine 34/cysteine 67, and cysteine 54/cysteine 75.

It belongs to the AVIT (prokineticin) family. Expressed by the venom gland.

It localises to the secreted. The protein is U8-theraphotoxin-Hhn1b of Cyriopagopus hainanus (Chinese bird spider).